The chain runs to 519 residues: MVFKAHHRSITRQDIELEDLENAPASIASIENDTLEANVGSTPLTAKQKRNIYFLILLYLIQGVPMGLVRGSIPYFLKPNVSYSDLATYSLAAYPYSLKVLWSPIVDTYYCRSFGRRKTWVVPCMLLISSTLLLFSYNVDTWISKGSSYINSFTTWSFLLVFVCATQDIAVDGWSLNMLNPEQLSYASTAQTVGLNTGFFLSFTILLVFTSPEFANTFIRSIPSNEGLITLSGYIKFWAYFTFIASVLVCFWDESNHQEIANISDMWKTIRAALSLKNMRQLLIVHTLGKVGFVANETLTLLKATEFGLSNEMLSLIILINFPLGLALGVYTGRISNYRPLDIWLKGYWGRVVSILLNTILVYMVSNWKHRFPVFFPIFLCYTLNASFSTIQFVALGVFHSKISDPHIGGTYMTILNTLSNLGGSWPQYVMLRMADLLTVSSCSTAPHLTCSADAQKKECQALGGTCLYKRDGYYLTSIVGIFLAISICVSLITPVVRRLTKAPISSWHIHSKIAETYT.

A run of 11 helical transmembrane segments spans residues 52–72 (IYFLILLYLIQGVPMGLVRGS), 86–106 (LATYSLAAYPYSLKVLWSPIV), 119–139 (TWVVPCMLLISSTLLLFSYNV), 156–176 (WSFLLVFVCATQDIAVDGWSL), 199–219 (FFLSFTILLVFTSPEFANTFI), 231–251 (LSGYIKFWAYFTFIASVLVCF), 313–333 (MLSLIILINFPLGLALGVYTG), 343–363 (IWLKGYWGRVVSILLNTILVY), 374–394 (VFFPIFLCYTLNASFSTIQFV), 408–430 (IGGTYMTILNTLSNLGGSWPQYV), and 477–497 (TSIVGIFLAISICVSLITPVV).

The protein localises to the membrane. This is an uncharacterized protein from Schizosaccharomyces pombe (strain 972 / ATCC 24843) (Fission yeast).